Reading from the N-terminus, the 197-residue chain is Recombination protein RecR (197 aa).

A C4-type zinc finger spans residues 55–70 (CVQCRDFTESEICTIC). Positions 78 to 173 (QQLCVVESPA…RPSRLAQGMP (96 aa)) constitute a Toprim domain.

The protein belongs to the RecR family.

May play a role in DNA repair. It seems to be involved in an RecBC-independent recombinational process of DNA repair. It may act with RecF and RecO. The chain is Recombination protein RecR from Xanthomonas axonopodis pv. citri (strain 306).